Here is a 249-residue protein sequence, read N- to C-terminus: Hydantoin racemase (249 aa).

It belongs to the HyuE racemase family. In terms of assembly, homohexamer.

It catalyses the reaction a D-5-monosubstituted hydantoin = a L-5-monosubstituted hydantoin. It carries out the reaction D-5-[2-(methylsulfanyl)ethyl]hydantoin = L-5-[2-(methysulfanyl)ethyl]hydantoin. The enzyme catalyses D-5-benzylhydantoin = L-5-benzylhydantoin. The catalysed reaction is D-5-isopropylhydantoin = L-5-isopropylhydantoin. It catalyses the reaction D-5-isobutylhydantoin = L-5-isobutylhydantoin. With respect to regulation, strongly inhibited by Cu(2+) and Zn(2+). Slightly stimulated by the addition of Mn(2+) or Co(2+), but also by metal-chelating agents such as EDTA or EGTA, indicating that the enzyme is not a metalloenzyme. Involved in the asymmetric conversion of racemic 5-substituted hydantoins to the corresponding L-amino acids. Catalyzes the racemization via enolization of D- and L-5-monosubstituted hydantoins. Is able to racemize 5-substituted hydantoins having aromatic or aliphatic substituents such as 5-(2-methylthioethyl)hydantoin, 5-isopropylhydantoin, 5-isobutylhydantoin and 5-benzylhydantoin. The polypeptide is Hydantoin racemase (Pseudomonas sp. (strain NS671)).